We begin with the raw amino-acid sequence, 867 residues long: Putative ribosome biogenesis ATPase nvl (867 aa).

The segment at 70 to 203 (LSSCESSENE…NNNNGNNKDN (134 aa)) is disordered. Over residues 110-122 (EQLTSQYKQNIKN) the composition is skewed to polar residues. Low complexity-rich tracts occupy residues 123 to 132 (TPPTTTTTTP), 141 to 172 (IPSNVNSNNNNNNNNNAINSNTTTNNVNTPNS), and 180 to 203 (NSSNGNNVFQFSNNNNNNGNNKDN). 257–264 (GPSGCGKT) is a binding site for ATP. Residues 351 to 370 (SSNNSTNEPNEQTEQQQQQQ) are disordered. Residue 607–614 (GPPGCGKT) participates in ATP binding. Residues 834–843 (DINKSRDKKP) show a composition bias toward basic and acidic residues. The segment at 834-855 (DINKSRDKKPNNSNNIPITNNI) is disordered. The span at 844–855 (NNSNNIPITNNI) shows a compositional bias: low complexity.

This sequence belongs to the AAA ATPase family.

It is found in the nucleus. It localises to the nucleolus. Its subcellular location is the nucleoplasm. In terms of biological role, involved in ribosome biogenesis. The polypeptide is Putative ribosome biogenesis ATPase nvl (nvl) (Dictyostelium discoideum (Social amoeba)).